The primary structure comprises 341 residues: Putative UPF0607 protein ENSP00000381514 (341 aa).

A compositionally biased stretch (basic and acidic residues) spans 78-89 (AEEPKEATEVKD). Disordered regions lie at residues 78–131 (AEEP…NPRP) and 216–282 (GLLT…KLPC). Positions 108-127 (EAASTSRPLETQGNLTSSWY) are enriched in polar residues. A compositionally biased stretch (basic residues) spans 243–252 (AGHRSRKRKL).

It belongs to the UPF0607 family.

The sequence is that of Putative UPF0607 protein ENSP00000381514 from Homo sapiens (Human).